A 283-amino-acid chain; its full sequence is Elongation factor Ts (283 aa).

The involved in Mg(2+) ion dislocation from EF-Tu stretch occupies residues 79 to 82 (TDFV).

This sequence belongs to the EF-Ts family.

Its subcellular location is the cytoplasm. Functionally, associates with the EF-Tu.GDP complex and induces the exchange of GDP to GTP. It remains bound to the aminoacyl-tRNA.EF-Tu.GTP complex up to the GTP hydrolysis stage on the ribosome. The chain is Elongation factor Ts from Shewanella baltica (strain OS155 / ATCC BAA-1091).